Reading from the N-terminus, the 477-residue chain is Cysteine--tRNA ligase (477 aa).

Cys-30 provides a ligand contact to Zn(2+). The 'HIGH' region signature appears at 32–42 (PTVYDYNHIGH). Residues Cys-209, His-234, and Glu-238 each contribute to the Zn(2+) site. The 'KMSKS' region motif lies at 267–271 (KMSKS). Residue Lys-270 participates in ATP binding.

It belongs to the class-I aminoacyl-tRNA synthetase family. Requires Zn(2+) as cofactor.

It is found in the cytoplasm. It carries out the reaction tRNA(Cys) + L-cysteine + ATP = L-cysteinyl-tRNA(Cys) + AMP + diphosphate. The polypeptide is Cysteine--tRNA ligase (Staphylothermus marinus (strain ATCC 43588 / DSM 3639 / JCM 9404 / F1)).